We begin with the raw amino-acid sequence, 118 residues long: Large ribosomal subunit protein uL18 (118 aa).

Belongs to the universal ribosomal protein uL18 family. In terms of assembly, part of the 50S ribosomal subunit; part of the 5S rRNA/L5/L18/L25 subcomplex. Contacts the 5S and 23S rRNAs.

Functionally, this is one of the proteins that bind and probably mediate the attachment of the 5S RNA into the large ribosomal subunit, where it forms part of the central protuberance. In Campylobacter hominis (strain ATCC BAA-381 / DSM 21671 / CCUG 45161 / LMG 19568 / NCTC 13146 / CH001A), this protein is Large ribosomal subunit protein uL18.